The sequence spans 590 residues: CTP synthase (590 aa).

The tract at residues 1 to 278 (MRKHPQSATK…DAFVVRRLNL (278 aa)) is amidoligase domain. Residue Ser20 coordinates CTP. Ser20 lines the UTP pocket. ATP is bound by residues 21–26 (SLGKGL) and Asp78. The Mg(2+) site is built by Asp78 and Glu152. Residues 159 to 161 (DIE), 199 to 204 (KTKPTQ), and Lys235 contribute to the CTP site. UTP-binding positions include 199–204 (KTKPTQ) and Lys235. Positions 303–551 (RIALVGKYVD…VGAAIDYKSA (249 aa)) constitute a Glutamine amidotransferase type-1 domain. Gly366 is a binding site for L-glutamine. Cys393 (nucleophile; for glutamine hydrolysis) is an active-site residue. L-glutamine contacts are provided by residues 394–397 (LGLQ), Glu416, and Arg477. Active-site residues include His524 and Glu526. The segment at 566 to 590 (EHLPNSSNQHRDGVERSFPAPAARG) is disordered.

It belongs to the CTP synthase family. As to quaternary structure, homotetramer.

The catalysed reaction is UTP + L-glutamine + ATP + H2O = CTP + L-glutamate + ADP + phosphate + 2 H(+). It carries out the reaction L-glutamine + H2O = L-glutamate + NH4(+). It catalyses the reaction UTP + NH4(+) + ATP = CTP + ADP + phosphate + 2 H(+). It functions in the pathway pyrimidine metabolism; CTP biosynthesis via de novo pathway; CTP from UDP: step 2/2. Its activity is regulated as follows. Allosterically activated by GTP, when glutamine is the substrate; GTP has no effect on the reaction when ammonia is the substrate. The allosteric effector GTP functions by stabilizing the protein conformation that binds the tetrahedral intermediate(s) formed during glutamine hydrolysis. Inhibited by the product CTP, via allosteric rather than competitive inhibition. Its function is as follows. Catalyzes the ATP-dependent amination of UTP to CTP with either L-glutamine or ammonia as the source of nitrogen. Regulates intracellular CTP levels through interactions with the four ribonucleotide triphosphates. This Mycobacterium leprae (strain Br4923) protein is CTP synthase.